A 209-amino-acid chain; its full sequence is SelT-like protein (209 aa).

A signal peptide spans 1–22 (MDKTQLILLGLPIFLLCSDLFN). Cysteines 64 and 67 form a disulfide.

It belongs to the SelWTH family. SELT subfamily.

This Arabidopsis thaliana (Mouse-ear cress) protein is SelT-like protein.